Consider the following 184-residue polypeptide: Non-specific lipid transfer protein GPI-anchored 6 (184 aa).

Residues 1-24 form the signal peptide; the sequence is MEKSTRTLFITIVITSMLLGFGNS. 4 disulfides stabilise this stretch: C33–C74, C43–C58, C59–C101, and C72–C111. The tract at residues 138–158 is disordered; sequence NSTSPTQIHKDGTGGGKAEPV. S160 is lipidated: GPI-anchor amidated serine. Positions 161-184 are cleaved as a propeptide — removed in mature form; it reads NGWKEKSWLGVELLIYLLVSLIFF.

The protein belongs to the plant LTP family. In terms of tissue distribution, preferentially expressed in the shoot apical meristem and the root meristem. Also present in the ovules and developing embryos. Observed in cotyledons, hypocotyls, flowers, leaves and siliques. Up-regulated in the epidermis of stems.

It is found in the cell membrane. In terms of biological role, lipid transfer protein involved in seed and ovule maturation and development, probably by regulating the fatty acids homeostasis during suberin and sporopollenin biosynthesis or deposition. Contributes to pre-invasive defense against some non-host powdery mildew pathogens by preventing the penetration of the epidermal cell wall by the fungal agents (e.g. Blumeria graminis f. sp. hordei (Bgh)). The chain is Non-specific lipid transfer protein GPI-anchored 6 from Arabidopsis thaliana (Mouse-ear cress).